We begin with the raw amino-acid sequence, 132 residues long: Fatty acid-binding protein, intestinal (132 aa).

N-acetylalanine is present on Ala2. Residues Trp83 and Arg107 each contribute to the hexadecanoate site. Positions 83 and 107 each coordinate tetradecanoate.

The protein belongs to the calycin superfamily. Fatty-acid binding protein (FABP) family.

Its subcellular location is the cytoplasm. Its function is as follows. FABPs are thought to play a role in the intracellular transport of long-chain fatty acids and their acyl-CoA esters. This chain is Fatty acid-binding protein, intestinal (fabp2), found in Xenopus laevis (African clawed frog).